An 800-amino-acid chain; its full sequence is uncharacterized protein (800 aa).

An N-terminal signal peptide occupies residues 1-21; sequence MNRFFISTLLLLAQHLAPAAA. The span at 63–72 shows a compositional bias: polar residues; that stretch reads SLSTGSPVEI. Disordered regions lie at residues 63–470, 602–670, and 710–776; these read SLST…PLTT, TPIT…SSTS, and SSLS…TPSS. 4 stretches are compositionally biased toward low complexity: residues 73 to 314, 321 to 368, 375 to 444, and 451 to 470; these read TSTS…SSTS, STSS…SSTS, STSS…TSTP, and TTST…PLTT. Over residues 710–720 the composition is skewed to low complexity; the sequence is SSLSSIPNNST. The span at 721–734 shows a compositional bias: polar residues; it reads EVKTASTSSGTEIK. Over residues 735–776 the composition is skewed to low complexity; it reads TASTSSGSSSSSSYTPASSTSTTTSSVSSRQSSSSSSFTPSS.

Its subcellular location is the secreted. The protein localises to the cell surface. This is an uncharacterized protein from Schizosaccharomyces pombe (strain 972 / ATCC 24843) (Fission yeast).